The following is a 261-amino-acid chain: Gap junction beta-6 protein (261 aa).

At 1–22 (MDWGTLHTVIGGVNKHSTSIGK) the chain is on the cytoplasmic side. A helical membrane pass occupies residues 23–45 (VWITVIFIFRVMILVVAAQEVWG). Residues 46–75 (DEQEDFVCNTLQPGCKNVCYDHFFPVSHIR) are Extracellular-facing. Residues 76-98 (LWALQLIFVSTPALLVAMHVAYY) traverse the membrane as a helical segment. The Cytoplasmic portion of the chain corresponds to 99–131 (RHETARKFIRGEKRNEFKDLEDIKRQKVRIEGS). Residues 132-154 (LWWTYTSSIFFRIIFEAAFMYVF) traverse the membrane as a helical segment. Topologically, residues 155–192 (YFLYNGYHLPWVLKCGIDPCPNLVDCFISRPTEKTVFT) are extracellular. A helical membrane pass occupies residues 193–215 (VFMISASVICMLLNVAELCYLLL). The Cytoplasmic portion of the chain corresponds to 216 to 261 (KLCFRRSKRTQAQRNHPNHALKESKQNEMNELISDSGQNAITSFPS).

It belongs to the connexin family. Beta-type (group I) subfamily. A connexon is composed of a hexamer of connexins. Interacts with CNST. Highly expressed in adult brain and skin. Less in uterus, lung and eye. Very low in testis and sciatic nerve. No expression before birth.

Its subcellular location is the cell membrane. It is found in the cell junction. It localises to the gap junction. One gap junction consists of a cluster of closely packed pairs of transmembrane channels, the connexons, through which materials of low MW diffuse from one cell to a neighboring cell. This Mus musculus (Mouse) protein is Gap junction beta-6 protein (Gjb6).